The primary structure comprises 148 residues: Troponin C (148 aa).

4 consecutive EF-hand domains span residues 8 to 43 (KQFN…LALH), 44 to 79 (VSDD…KVQE), 81 to 116 (EDER…LGDD), and 117 to 148 (LNDD…LMLG). 5 residues coordinate Ca(2+): aspartate 130, aspartate 132, serine 134, threonine 136, and glutamate 141.

The protein belongs to the troponin C family.

Functionally, troponin is the central regulatory protein of striated muscle contraction. Tn consists of three components: Tn-I which is the inhibitor of actomyosin ATPase, Tn-T which contains the binding site for tropomyosin and Tn-C. The binding of calcium to Tn-C abolishes the inhibitory action of Tn on actin filaments. The polypeptide is Troponin C (Todarodes pacificus (Japanese flying squid)).